An 87-amino-acid polypeptide reads, in one-letter code: Small ribosomal subunit protein bS20 (87 aa).

Basic residues predominate over residues 1-11 (MANIKSAKKRA). Residues 1–27 (MANIKSAKKRAVQSEKRRQHNASQRSM) form a disordered region.

It belongs to the bacterial ribosomal protein bS20 family.

In terms of biological role, binds directly to 16S ribosomal RNA. This is Small ribosomal subunit protein bS20 from Haemophilus influenzae (strain PittEE).